We begin with the raw amino-acid sequence, 134 residues long: NADH-quinone oxidoreductase subunit A 1 (134 aa).

A run of 3 helical transmembrane segments spans residues 10–30 (LIPLAIYTLFAVGLIGILLLA), 65–85 (FYLIAIFFIVFDVEGAFILAW), and 94–114 (IPGLVHITLFITVLLLGLVWL).

Belongs to the complex I subunit 3 family. NDH-1 is composed of 14 different subunits. Subunits NuoA, H, J, K, L, M, N constitute the membrane sector of the complex.

The protein localises to the cell inner membrane. It carries out the reaction a quinone + NADH + 5 H(+)(in) = a quinol + NAD(+) + 4 H(+)(out). Functionally, NDH-1 shuttles electrons from NADH, via FMN and iron-sulfur (Fe-S) centers, to quinones in the respiratory chain. The immediate electron acceptor for the enzyme in this species is believed to be ubiquinone. Couples the redox reaction to proton translocation (for every two electrons transferred, four hydrogen ions are translocated across the cytoplasmic membrane), and thus conserves the redox energy in a proton gradient. This chain is NADH-quinone oxidoreductase subunit A 1, found in Citrifermentans bemidjiense (strain ATCC BAA-1014 / DSM 16622 / JCM 12645 / Bem) (Geobacter bemidjiensis).